Here is a 267-residue protein sequence, read N- to C-terminus: 4-hydroxy-tetrahydrodipicolinate reductase (267 aa).

Residue 8-13 (GANGRM) participates in NAD(+) binding. Residue Arg-35 participates in NADP(+) binding. Residues 98 to 100 (GTT) and 122 to 125 (AANY) each bind NAD(+). The active-site Proton donor/acceptor is His-155. His-156 provides a ligand contact to (S)-2,3,4,5-tetrahydrodipicolinate. The active-site Proton donor is the Lys-159. A (S)-2,3,4,5-tetrahydrodipicolinate-binding site is contributed by 165-166 (GT).

It belongs to the DapB family.

The protein resides in the cytoplasm. It carries out the reaction (S)-2,3,4,5-tetrahydrodipicolinate + NAD(+) + H2O = (2S,4S)-4-hydroxy-2,3,4,5-tetrahydrodipicolinate + NADH + H(+). The enzyme catalyses (S)-2,3,4,5-tetrahydrodipicolinate + NADP(+) + H2O = (2S,4S)-4-hydroxy-2,3,4,5-tetrahydrodipicolinate + NADPH + H(+). The protein operates within amino-acid biosynthesis; L-lysine biosynthesis via DAP pathway; (S)-tetrahydrodipicolinate from L-aspartate: step 4/4. Its function is as follows. Catalyzes the conversion of 4-hydroxy-tetrahydrodipicolinate (HTPA) to tetrahydrodipicolinate. In Pseudoalteromonas atlantica (strain T6c / ATCC BAA-1087), this protein is 4-hydroxy-tetrahydrodipicolinate reductase.